We begin with the raw amino-acid sequence, 383 residues long: Phosphoenolpyruvate/phosphate translocator 2, chloroplastic (383 aa).

A chloroplast-targeting transit peptide spans 1–55 (MFALTFLNPNPRLPSPLFLAKSTPESALSRRSRAFSSSNSYPWRPNLRFNGFKLK). Helical transmembrane passes span 76–96 (GLKL…YNIF), 108–128 (ATVT…MWLL), 143–163 (VIVQ…VSLG), 179–199 (FFTV…WIVC), 210–232 (LASF…SNVT), 253–273 (INLF…LAIL), 299–319 (IMSL…YMIL), and 350–369 (VSPL…YLYS). The EamA domain maps to 93–212 (YNIFNKQVLR…PIVAGVSLAS (120 aa)).

The protein belongs to the TPT transporter family. PPT (TC 2.A.7.9) subfamily. In terms of tissue distribution, widely expressed in leaves throughout development. In flowers, expressed in sepals and pistils.

Its subcellular location is the plastid. The protein localises to the chloroplast membrane. In terms of biological role, phosphoenolpyruvate/phosphate translocator that transports phosphoenolpyruvate (PEP), 2-phosphoglycerate and 3-phosphoglycerate. The sequence is that of Phosphoenolpyruvate/phosphate translocator 2, chloroplastic (PPT2) from Arabidopsis thaliana (Mouse-ear cress).